The following is a 350-amino-acid chain: Phosphotriesterase-related protein (350 aa).

6 residues coordinate a divalent metal cation: His22, His24, Glu169, His201, His230, and Asp298.

This sequence belongs to the metallo-dependent hydrolases superfamily. Phosphotriesterase family. A divalent metal cation is required as a cofactor.

The sequence is that of Phosphotriesterase-related protein from Drosophila grimshawi (Hawaiian fruit fly).